The following is a 236-amino-acid chain: Small ribosomal subunit protein bS21m (236 aa).

The segment at 65–136 (KPAAGAAAGG…SSKPSPMQTW (72 aa)) is disordered. The segment covering 107-131 (SNSSTSSSSSSSSSGGALYSSSKPS) has biased composition (low complexity).

It belongs to the bacterial ribosomal protein bS21 family. In terms of assembly, component of the mitochondrial small ribosomal subunit (mt-SSU). Mature N.crassa 74S mitochondrial ribosomes consist of a small (37S) and a large (54S) subunit. The 37S small subunit contains a 16S ribosomal RNA (16S mt-rRNA) and 32 different proteins. The 54S large subunit contains a 23S rRNA (23S mt-rRNA) and 42 different proteins.

The protein localises to the mitochondrion. Component of the mitochondrial ribosome (mitoribosome), a dedicated translation machinery responsible for the synthesis of mitochondrial genome-encoded proteins, including at least some of the essential transmembrane subunits of the mitochondrial respiratory chain. The mitoribosomes are attached to the mitochondrial inner membrane and translation products are cotranslationally integrated into the membrane. The polypeptide is Small ribosomal subunit protein bS21m (mrp21) (Neurospora crassa (strain ATCC 24698 / 74-OR23-1A / CBS 708.71 / DSM 1257 / FGSC 987)).